The chain runs to 204 residues: Holliday junction branch migration complex subunit RuvA (204 aa).

The domain I stretch occupies residues 1-64 (MIGRLRGTLI…EDAQLLYGFN (64 aa)). Residues 65 to 143 (TVSERALFRE…GWGAGDLFTP (79 aa)) are domain II. The tract at residues 144–155 (ATDAAPVDSTPV) is flexible linker. The domain III stretch occupies residues 156 to 204 (IAQNAQEEAMSALLALGYKPPQASKAVSQVAKAGMSSEELIREALKSMV).

It belongs to the RuvA family. As to quaternary structure, homotetramer. Forms an RuvA(8)-RuvB(12)-Holliday junction (HJ) complex. HJ DNA is sandwiched between 2 RuvA tetramers; dsDNA enters through RuvA and exits via RuvB. An RuvB hexamer assembles on each DNA strand where it exits the tetramer. Each RuvB hexamer is contacted by two RuvA subunits (via domain III) on 2 adjacent RuvB subunits; this complex drives branch migration. In the full resolvosome a probable DNA-RuvA(4)-RuvB(12)-RuvC(2) complex forms which resolves the HJ.

The protein resides in the cytoplasm. Its function is as follows. The RuvA-RuvB-RuvC complex processes Holliday junction (HJ) DNA during genetic recombination and DNA repair, while the RuvA-RuvB complex plays an important role in the rescue of blocked DNA replication forks via replication fork reversal (RFR). RuvA specifically binds to HJ cruciform DNA, conferring on it an open structure. The RuvB hexamer acts as an ATP-dependent pump, pulling dsDNA into and through the RuvAB complex. HJ branch migration allows RuvC to scan DNA until it finds its consensus sequence, where it cleaves and resolves the cruciform DNA. The protein is Holliday junction branch migration complex subunit RuvA of Vibrio cholerae serotype O1 (strain ATCC 39541 / Classical Ogawa 395 / O395).